The primary structure comprises 287 residues: tRNA selenocysteine 1-associated protein 1 (287 aa).

RRM domains are found at residues 3–86 (ASLW…YATY) and 96–175 (YSLF…VAIP).

Belongs to the RRM TRSPAP family. Component of the tRNA(Sec) complex composed at least of EEFSEC, SECISBP2, SEPHS1, SEPSECS, TRNAU1AP and tRNA(Sec). Found in a complex with tRNA(Sec). Interacts with SEPSECS. Associates with mRNP and/or polysomes. Found in a complex with EEFSEC, SECISBP2, TRNAU1AP and tRNA(Sec).

It is found in the nucleus. The protein resides in the cytoplasm. Involved in the early steps of selenocysteine biosynthesis and tRNA(Sec) charging to the later steps resulting in the cotranslational incorporation of selenocysteine into selenoproteins. Stabilizes the SECISBP2, EEFSEC and tRNA(Sec) complex. May be involved in the methylation of tRNA(Sec). Enhances efficiency of selenoproteins synthesis. The chain is tRNA selenocysteine 1-associated protein 1 (TRNAU1AP) from Homo sapiens (Human).